A 516-amino-acid chain; its full sequence is Coiled-coil domain-containing protein 82 (516 aa).

Basic residues predominate over residues 1–13 (MVHARRHETRKNS). Positions 1-265 (MVHARRHETR…DYGDAENEDD (265 aa)) are disordered. Residues 38 to 62 (DSDEELDSDEEIGSDEDLDGGESID) show a composition bias toward acidic residues. A compositionally biased stretch (basic and acidic residues) spans 78-96 (IPEKETELNLIKVESERSN). Over residues 98 to 107 (KCHMNTSSSS) the composition is skewed to polar residues. Over residues 113–135 (MNKTKHNDLPDDEAHPGQAEGHH) the composition is skewed to basic and acidic residues. Serine 170 and serine 194 each carry phosphoserine. The residue at position 202 (threonine 202) is a Phosphothreonine. Residues 204 to 232 (EKSPAARKREYHQKLQELCERSRQKQRHN) are a coiled coil. Positions 215-226 (HQKLQELCERSR) are enriched in basic and acidic residues. Over residues 248–265 (TDEDEDDDDYGDAENEDD) the composition is skewed to acidic residues. Serine 301 carries the phosphoserine modification.

This is Coiled-coil domain-containing protein 82 (Ccdc82) from Rattus norvegicus (Rat).